The primary structure comprises 166 residues: Flagellar protein LafL (166 aa).

A helical membrane pass occupies residues 6–26; sequence MIAMFIAMIITSALVSAATIM.

It belongs to the FliL family.

The protein resides in the cell inner membrane. Controls the rotational direction of flagella during chemotaxis. This is Flagellar protein LafL (lafL) from Vibrio parahaemolyticus serotype O3:K6 (strain RIMD 2210633).